A 267-amino-acid polypeptide reads, in one-letter code: Alpha-tubulin N-acetyltransferase (267 aa).

Positions 1–197 (MDFRAGLENV…NNFVVYSEFF (197 aa)) constitute an N-acetyltransferase domain. Residues 131-144 (FYIH…GYGK) and 167-176 (SMKMIQFLHK) each bind acetyl-CoA.

This sequence belongs to the acetyltransferase ATAT1 family.

The catalysed reaction is L-lysyl-[alpha-tubulin] + acetyl-CoA = N(6)-acetyl-L-lysyl-[alpha-tubulin] + CoA + H(+). Its function is as follows. Specifically acetylates 'Lys-40' in alpha-tubulin on the lumenal side of microtubules. Promotes microtubule destabilization and accelerates microtubule dynamics; this activity may be independent of acetylation activity. Acetylates alpha-tubulin with a slow enzymatic rate, due to a catalytic site that is not optimized for acetyl transfer. Enters the microtubule through each end and diffuses quickly throughout the lumen of microtubules. Acetylates only long/old microtubules because of its slow acetylation rate since it does not have time to act on dynamically unstable microtubules before the enzyme is released. This Schistosoma japonicum (Blood fluke) protein is Alpha-tubulin N-acetyltransferase.